A 383-amino-acid polypeptide reads, in one-letter code: Transcription factor Y1 (383 aa).

2 consecutive HTH myb-type domains span residues 9–61 and 62–116; these read KVGL…INYL and RADV…SRQI. 2 DNA-binding regions (H-T-H motif) span residues 37 to 61 and 89 to 112; these read WRSL…INYL and WSLI…NSHL. Residues 136 to 250 are disordered; that stretch reads SKLHSAEKRR…DATGPWELDP (115 aa). Low complexity-rich tracts occupy residues 155 to 170 and 191 to 207; these read KSSS…SSKT and ASSP…ASSP.

Its subcellular location is the nucleus. Its pathway is pigment biosynthesis. Its function is as follows. Transcription factor involved in regulating the biosynthetic pathway of flavan-4-ol-derived red phlobaphene and red-brown 3-deoxyanthocyanidin (3-DA) pigments. Regulates transcription of chalcone synthase, chalcone isomerase, dihydroflavonol reductase and flavonoid 3'-hydroxylase genes required for the phlobaphene and 3-DA biosynthesis. Transcription of these genes is activated in mesocotyls in response to ingress of non-pathogenic fungus C.heterostrophus. Regulates the production of 3-DA phytoalexins (luteolinidin, 5-methoxyluteolinidin, apigeninidin and 7-methoxyapigeninidin) in mesocotyls in response to C.heterostrophus and corn leaf aphid (CLA) R.maidis. Involved in resistance against anthracnose leaf blight (ALB) caused by the pathogenic C.sublineolum fungus by inducing the production of 3-DA phytoalexins. Confers resistance, also by inducing the production of 3-DA phytoalexins, against CLA R.maidis, which is an insect and a pest. This Sorghum bicolor (Sorghum) protein is Transcription factor Y1.